Consider the following 176-residue polypeptide: Telomerase RNA component interacting RNase (176 aa).

The segment covering 1–12 has biased composition (basic and acidic residues); sequence MAARGRRAEPQG. The tract at residues 1 to 121 is disordered; sequence MAARGRRAEP…TLSFVGKRRG (121 aa). Over residues 45-56 the composition is skewed to low complexity; that stretch reads SGAGSSPVSGGV. The segment covering 68–83 has biased composition (basic and acidic residues); the sequence is LFKRKMEEEQRQRQEE. Low complexity predominate over residues 90 to 101; the sequence is RPDQSAAAAGPG. N6-acetyllysine is present on lysine 146.

As to quaternary structure, part of the telomerase RNA 3' end complex which contains about 488 proteins.

Its activity is regulated as follows. Zn(2+) inhibits the RNase activity while Mg(2+), Ca(2+), Mn(2+), K(+), Na(+), EDTA and EGTA show little effect on the exoribonuclease activity. Functionally, exoribonuclease that is part of the telomerase RNA 3' end processing complex and which has the ability to cleave all four unpaired RNA nucleotides from the 5' end or 3' end with higher efficiency for purine bases. The sequence is that of Telomerase RNA component interacting RNase from Homo sapiens (Human).